The primary structure comprises 82 residues: uncharacterized protein (82 aa).

This is an uncharacterized protein from Treponema pallidum (strain Nichols).